The primary structure comprises 196 residues: Pyroglutamyl-peptidase 1-like protein (196 aa).

Catalysis depends on residues glutamate 65, cysteine 127, and histidine 146.

Belongs to the peptidase C15 family.

This is Pyroglutamyl-peptidase 1-like protein (PGPEP1L) from Homo sapiens (Human).